The chain runs to 106 residues: Large ribosomal subunit protein bL21 (106 aa).

It belongs to the bacterial ribosomal protein bL21 family. In terms of assembly, part of the 50S ribosomal subunit. Contacts protein L20.

Its function is as follows. This protein binds to 23S rRNA in the presence of protein L20. The chain is Large ribosomal subunit protein bL21 from Xanthomonas oryzae pv. oryzae (strain MAFF 311018).